Consider the following 159-residue polypeptide: Ribosomal RNA large subunit methyltransferase H (159 aa).

S-adenosyl-L-methionine contacts are provided by residues leucine 76, glycine 108, and 127-132; that span reads FSKMTF.

The protein belongs to the RNA methyltransferase RlmH family. In terms of assembly, homodimer.

The protein resides in the cytoplasm. The catalysed reaction is pseudouridine(1915) in 23S rRNA + S-adenosyl-L-methionine = N(3)-methylpseudouridine(1915) in 23S rRNA + S-adenosyl-L-homocysteine + H(+). In terms of biological role, specifically methylates the pseudouridine at position 1915 (m3Psi1915) in 23S rRNA. This Clostridium botulinum (strain Eklund 17B / Type B) protein is Ribosomal RNA large subunit methyltransferase H.